The chain runs to 190 residues: Elongation factor P-like protein (190 aa).

The protein belongs to the elongation factor P family.

The protein is Elongation factor P-like protein of Pseudoalteromonas atlantica (strain T6c / ATCC BAA-1087).